The sequence spans 422 residues: MLTLGEDQIGRIGASSSWSRSKKLRVHRYEIPDLNVEPSLDWDGEETGEATKALSSTCLKPKDADYCLLNVPQLVYELEVEILARVPRFEYWKLKLLNKGFSRLLKSDEIFKVRRERGVVEPSVFMLSSGDTCWTMFDKGFGNCQKLPELPSDICFLHGDKESLCAGTHLIVTGKEEKSIALWRYELETSKWFKGPAMITPRILFASATCGTVVFVAGGLKIEGNGTMEVVDSVEKYDSKTKTWTLLRGMHKRRKFCSGCYLRGKFYVLGGRDENGQNLTCGESYDEKTNTWELIPDILKDMSFSSVQSPPLIAVVGDDLYSLETSANELRVYDANANSWKKLGDVPVRAKSNGGWGVAFKSLGDKLLVIGASAGPSRAETMSVYTSRPSANPANKLYWEESKRCCGVRFNHFILNCCVMIA.

The F-box domain occupies 68-114; that stretch reads LLNVPQLVYELEVEILARVPRFEYWKLKLLNKGFSRLLKSDEIFKVR. Kelch repeat units follow at residues 162–212, 213–264, 266–312, 314–361, and 366–412; these read ESLC…TCGT, VVFV…YLRG, FYVL…SPPL, AVVG…VAFK, and KLLV…RFNH.

This is F-box/kelch-repeat protein At3g27150 from Arabidopsis thaliana (Mouse-ear cress).